A 423-amino-acid chain; its full sequence is Imidazolonepropionase (423 aa).

The Fe(3+) site is built by His-78 and His-80. 2 residues coordinate Zn(2+): His-78 and His-80. Positions 87, 150, and 183 each coordinate 4-imidazolone-5-propanoate. Residue Tyr-150 participates in N-formimidoyl-L-glutamate binding. Residue His-247 coordinates Fe(3+). His-247 is a Zn(2+) binding site. Glu-250 contacts 4-imidazolone-5-propanoate. Asp-322 is a Fe(3+) binding site. Asp-322 is a binding site for Zn(2+). The N-formimidoyl-L-glutamate site is built by Asn-324 and Gly-326. Ser-327 contributes to the 4-imidazolone-5-propanoate binding site.

This sequence belongs to the metallo-dependent hydrolases superfamily. HutI family. Requires Zn(2+) as cofactor. It depends on Fe(3+) as a cofactor.

The protein resides in the cytoplasm. It catalyses the reaction 4-imidazolone-5-propanoate + H2O = N-formimidoyl-L-glutamate. Its pathway is amino-acid degradation; L-histidine degradation into L-glutamate; N-formimidoyl-L-glutamate from L-histidine: step 3/3. Its function is as follows. Catalyzes the hydrolytic cleavage of the carbon-nitrogen bond in imidazolone-5-propanoate to yield N-formimidoyl-L-glutamate. It is the third step in the universal histidine degradation pathway. In Bacillus cereus (strain G9842), this protein is Imidazolonepropionase.